A 114-amino-acid polypeptide reads, in one-letter code: Probable 4-amino-4-deoxy-L-arabinose-phosphoundecaprenol flippase subunit ArnE (114 aa).

3 consecutive transmembrane segments (helical) span residues 41-61 (PWLIASVAALGCGMLLWIYLL), 64-84 (LPLSMAYPMLSINLVLVLVGS), and 94-114 (YHNWLGVGAIIVGALLLGGLL). Residues 43–112 (LIASVAALGC…IIVGALLLGG (70 aa)) form the EamA domain.

This sequence belongs to the ArnE family. In terms of assembly, heterodimer of ArnE and ArnF.

The protein resides in the cell inner membrane. It functions in the pathway bacterial outer membrane biogenesis; lipopolysaccharide biosynthesis. In terms of biological role, translocates 4-amino-4-deoxy-L-arabinose-phosphoundecaprenol (alpha-L-Ara4N-phosphoundecaprenol) from the cytoplasmic to the periplasmic side of the inner membrane. This Aeromonas hydrophila subsp. hydrophila (strain ATCC 7966 / DSM 30187 / BCRC 13018 / CCUG 14551 / JCM 1027 / KCTC 2358 / NCIMB 9240 / NCTC 8049) protein is Probable 4-amino-4-deoxy-L-arabinose-phosphoundecaprenol flippase subunit ArnE.